We begin with the raw amino-acid sequence, 274 residues long: Elongation factor Ts (274 aa).

An involved in Mg(2+) ion dislocation from EF-Tu region spans residues 82–85 (TDFV).

It belongs to the EF-Ts family.

The protein localises to the cytoplasm. Functionally, associates with the EF-Tu.GDP complex and induces the exchange of GDP to GTP. It remains bound to the aminoacyl-tRNA.EF-Tu.GTP complex up to the GTP hydrolysis stage on the ribosome. This chain is Elongation factor Ts, found in Flavobacterium psychrophilum (strain ATCC 49511 / DSM 21280 / CIP 103535 / JIP02/86).